Reading from the N-terminus, the 319-residue chain is Coproporphyrin III ferrochelatase (319 aa).

Residues H193 and E274 each contribute to the Fe(2+) site.

It belongs to the ferrochelatase family.

The protein localises to the cytoplasm. The enzyme catalyses Fe-coproporphyrin III + 2 H(+) = coproporphyrin III + Fe(2+). It participates in porphyrin-containing compound metabolism; protoheme biosynthesis. Functionally, involved in coproporphyrin-dependent heme b biosynthesis. Catalyzes the insertion of ferrous iron into coproporphyrin III to form Fe-coproporphyrin III. This chain is Coproporphyrin III ferrochelatase, found in Streptococcus mutans serotype c (strain ATCC 700610 / UA159).